Reading from the N-terminus, the 367-residue chain is MLNVLMLGVGQCGNRILDAVNRQAFGGSRLAKYYSKQRFPSRVETIAINTAINDLKELKFTAAKDRLHVPNLHGVGANRSKGKQGFWENQEMILEEIEKRGDFDLIFVMTSVSGGTGSSFSPLMIHELKKRYKNATIVPIAVLPFREEGTIYLQNAAFCLREMIEVEADGMILVDNQYLKRFSGDIASAYDRINTMVAQRLLFLIEALDSEMLSVTDLGDFKTVMNGGLRMGTLGYYQADKKSPSIRAAIKNSLREVGLLYPANVDAGEAGRAMIVIQGSREYLNVDEITKEIESLTETIGHVFKGIVIKKGEPRVLSVLSLERAPGLVELYEKAKWAIQEERERKDRARSELYEAFEQINDLEEIY.

Residues 11–15 (QCGNR), Ser-111, 115–117 (GTG), Glu-148, Asn-176, and Asn-194 each bind GTP.

Belongs to the CetZ family.

It localises to the cytoplasm. In terms of biological role, involved in cell shape control. This chain is Tubulin-like protein CetZ, found in Methanothrix thermoacetophila (strain DSM 6194 / JCM 14653 / NBRC 101360 / PT) (Methanosaeta thermophila).